Consider the following 322-residue polypeptide: Sulfate adenylyltransferase subunit 2 (322 aa).

Belongs to the PAPS reductase family. CysD subfamily. As to quaternary structure, heterodimer composed of CysD, the smaller subunit, and CysN.

It carries out the reaction sulfate + ATP + H(+) = adenosine 5'-phosphosulfate + diphosphate. The protein operates within sulfur metabolism; hydrogen sulfide biosynthesis; sulfite from sulfate: step 1/3. With CysN forms the ATP sulfurylase (ATPS) that catalyzes the adenylation of sulfate producing adenosine 5'-phosphosulfate (APS) and diphosphate, the first enzymatic step in sulfur assimilation pathway. APS synthesis involves the formation of a high-energy phosphoric-sulfuric acid anhydride bond driven by GTP hydrolysis by CysN coupled to ATP hydrolysis by CysD. This Bradyrhizobium sp. (strain BTAi1 / ATCC BAA-1182) protein is Sulfate adenylyltransferase subunit 2.